The following is a 580-amino-acid chain: MFS-type transporter thnB (580 aa).

Positions 1 to 33 are disordered; the sequence is MSGDYSATRKSENVDTSTTASQEDSSLAPEQPE. A compositionally biased stretch (polar residues) spans 14–25; sequence VDTSTTASQEDS. 7 helical membrane-spanning segments follow: residues 60 to 80, 92 to 112, 125 to 145, 157 to 177, 188 to 208, 216 to 236, and 259 to 279; these read LITLVLAINLAMFLASLDQTI, FHGLSQVSWYGSAYFMCLGGF, LKISFAIAVFVFELGSLICGV, AIAGIGGAGITSGSTVILAFS, STMGVTYCIAFILGPLIGGAF, WCFYINLPIGGLAMALFFLFF, and VGTVLAMGGIISFILALQYAG. An N-linked (GlcNAc...) asparagine glycan is attached at N285. 7 consecutive transmembrane segments (helical) span residues 286–306, 331–351, 364–384, 389–409, 421–441, 457–477, and 529–549; these read SSVVIGLLVGFVLIMVTLAAW, IFQFFFVGCYFLLLFYLPIYF, VDNLPLVLSACLFIILGGAAV, MATPYMTAGSAVAAVATGLLY, IGYQVLVGAGLAFPFQNALNI, SLYFFQILGGAFSISAAQAAF, and FAVSVGLVGMAFLSSLHMVMI.

It belongs to the major facilitator superfamily.

It localises to the membrane. MFS-type transporter; part of the gene cluster that produces the tetronate natural products trihazones. The sequence is that of MFS-type transporter thnB from Trichoderma harzianum (Hypocrea lixii).